A 329-amino-acid polypeptide reads, in one-letter code: Serpentine receptor class alpha-2 (329 aa).

7 consecutive transmembrane segments (helical) span residues 25 to 45 (FVYL…VKIL), 57 to 77 (ILLV…GIEA), 104 to 124 (YYKI…GLLI), 144 to 164 (CAVI…LIVW), 188 to 208 (HYFT…TFIL), 240 to 260 (FLTV…IVLV), and 273 to 293 (LLVV…VILV).

Belongs to the nematode receptor-like protein sra family.

The protein localises to the membrane. This chain is Serpentine receptor class alpha-2 (sra-2), found in Caenorhabditis elegans.